Consider the following 256-residue polypeptide: 5'-nucleotidase SurE (256 aa).

A divalent metal cation-binding residues include Asp-8, Asp-9, Ser-40, and Asn-92.

This sequence belongs to the SurE nucleotidase family. The cofactor is a divalent metal cation.

It localises to the cytoplasm. It catalyses the reaction a ribonucleoside 5'-phosphate + H2O = a ribonucleoside + phosphate. Its function is as follows. Nucleotidase that shows phosphatase activity on nucleoside 5'-monophosphates. This Sinorhizobium fredii (strain NBRC 101917 / NGR234) protein is 5'-nucleotidase SurE.